The following is a 224-amino-acid chain: UPF0758 protein AHA_0160 (224 aa).

An MPN domain is found at 102-224; sequence PLTSPQLTRD…TVSFAERGWL (123 aa). Zn(2+) is bound by residues H173, H175, and D186. Positions 173-186 match the JAMM motif motif; sequence HNHPSGVAEPSRAD.

Belongs to the UPF0758 family.

The sequence is that of UPF0758 protein AHA_0160 from Aeromonas hydrophila subsp. hydrophila (strain ATCC 7966 / DSM 30187 / BCRC 13018 / CCUG 14551 / JCM 1027 / KCTC 2358 / NCIMB 9240 / NCTC 8049).